Consider the following 337-residue polypeptide: ATP-dependent 6-phosphofructokinase (337 aa).

An ATP-binding site is contributed by Gly-11. 21–25 (RAVVR) lines the ADP pocket. ATP is bound by residues 72 to 73 (RY) and 102 to 105 (GDGS). Asp-103 is a binding site for Mg(2+). Residue 125-127 (TID) participates in substrate binding. Residue Asp-127 is the Proton acceptor of the active site. Arg-154 contributes to the ADP binding site. Residues Arg-162 and 169 to 171 (MGR) each bind substrate. ADP-binding positions include 185–187 (GAD) and 214–216 (KNH). Residues Glu-223, Arg-245, and 251-254 (HILR) contribute to the substrate site.

The protein belongs to the phosphofructokinase type A (PFKA) family. ATP-dependent PFK group I subfamily. Prokaryotic clade 'B1' sub-subfamily. As to quaternary structure, homotetramer. The cofactor is Mg(2+).

It localises to the cytoplasm. The catalysed reaction is beta-D-fructose 6-phosphate + ATP = beta-D-fructose 1,6-bisphosphate + ADP + H(+). It participates in carbohydrate degradation; glycolysis; D-glyceraldehyde 3-phosphate and glycerone phosphate from D-glucose: step 3/4. Its activity is regulated as follows. Allosterically activated by ADP and other diphosphonucleosides, and allosterically inhibited by phosphoenolpyruvate. In terms of biological role, catalyzes the phosphorylation of D-fructose 6-phosphate to fructose 1,6-bisphosphate by ATP, the first committing step of glycolysis. This is ATP-dependent 6-phosphofructokinase from Streptococcus uberis (strain ATCC BAA-854 / 0140J).